The chain runs to 204 residues: Octanoyltransferase (204 aa).

The region spanning 27-204 is the BPL/LPL catalytic domain; that stretch reads KNTKDELWIV…LINYVSRNRH (178 aa). Residues 66–73, 133–135, and 146–148 each bind substrate; these read RGGQVTYH, ALG, and GLS. The active-site Acyl-thioester intermediate is Cys-164.

This sequence belongs to the LipB family.

It localises to the cytoplasm. The catalysed reaction is octanoyl-[ACP] + L-lysyl-[protein] = N(6)-octanoyl-L-lysyl-[protein] + holo-[ACP] + H(+). It participates in protein modification; protein lipoylation via endogenous pathway; protein N(6)-(lipoyl)lysine from octanoyl-[acyl-carrier-protein]: step 1/2. In terms of biological role, catalyzes the transfer of endogenously produced octanoic acid from octanoyl-acyl-carrier-protein onto the lipoyl domains of lipoate-dependent enzymes. Lipoyl-ACP can also act as a substrate although octanoyl-ACP is likely to be the physiological substrate. The chain is Octanoyltransferase from Vesicomyosocius okutanii subsp. Calyptogena okutanii (strain HA).